An 800-amino-acid polypeptide reads, in one-letter code: Protein gfi-3 (800 aa).

Positions 346–366 form a coiled coil; that stretch reads ESLQQAQLRNDEICHQMANIE. TPR repeat units lie at residues 526 to 559 and 637 to 670; these read AIGA…YPEE and IRIH…AENT.

As to quaternary structure, the APC/C complex is probably composed of at least 12 subunits: apc-2, apc-10, apc-11, cdc-26, emb-1, emb-27, emb-30, mat-1, mat-2, mat-3, such-1 and gfi-3. Expressed in gut cells and mature sperm stored in the spermatheca.

It functions in the pathway protein modification; protein ubiquitination. In terms of biological role, probable component of the anaphase promoting complex/cyclosome (APC/C), a cell cycle-regulated E3 ubiquitin ligase that controls progression through mitosis and the G1 phase of the cell cycle. The APC/C complex acts by mediating ubiquitination and subsequent degradation of target proteins. Required for the metaphase to anaphase transition in meiosis. The protein is Protein gfi-3 of Caenorhabditis elegans.